A 661-amino-acid chain; its full sequence is MLYVSNLPVGTSSSAIHALFSAYGNVKDIWMLSPDNSAIVSYESLSSAIVARDALHNRPVFENHGPVQVMLAKPSSNYEPGNITAAVSPPASTSSKDGVVCSPTSTGASQLLKSRVDILEVARQFEMRINLDIVDSMIASAIENNKVATEILPPVETLRSRQFEASKLREIRKNIDSGFYTQEEIEVIARSMLDDVAELSSDYLGNTVVQKFFEYCSDPIKEAMLERIAPYLAAIGIHKNGTWAAQKIIDVASTEKQMDLIVKHLRPYTALLYFDQFGNYVAQCCLRFKYPKNTFLFEVMARHCCEIGQSRFGARAIRACLENENATFEQQALVVASIIINSHLLATNSNGMLLLTWLLDNSFFRNRHRLLAIHLATHLHTTCTHKLASTLIFKLINNKQEPESRNLLLKNLFFSEKDNVLTYILQDQAVGPSFIHKVITYPSIGREFLAQFHLVIKRVLINIHAQPNAVYCRLMEEVGMTSKSISPSLSGISAPSASVDSSASRLARDFGSLSLSSNSLLGSLGGLESTPAYPSYPSHIPLGTASLPLKGNLYQISRSDDIKSGAPVLDTSSLVNPTLAKSASLNNSSLLNPSSSLLRREVPAGKLTMPAYPYTTQLMNHTAGADYGLPRLSSKLPQVFPGNYPRLQQSLFPRQGELRFN.

Residues 1-74 (MLYVSNLPVG…GPVQVMLAKP (74 aa)) form the RRM domain. Ser102 bears the Phosphoserine mark. Position 104 is a phosphothreonine (Thr104). Ser105 is modified (phosphoserine). The 354-residue stretch at 129–482 (INLDIVDSMI…RLMEEVGMTS (354 aa)) folds into the PUM-HD domain. Pumilio repeat units lie at residues 191 to 226 (SMLD…AMLE), 227 to 263 (RIAP…LIVK), 264 to 302 (HLRP…VMAR), and 374 to 410 (HLAT…LLLK). Ser482, Ser486, Ser488, and Ser490 each carry phosphoserine.

It localises to the cytoplasm. The protein is Pumilio domain-containing protein C56F2.08c of Schizosaccharomyces pombe (strain 972 / ATCC 24843) (Fission yeast).